The chain runs to 480 residues: Membrane-bound lytic murein transglycosylase F (480 aa).

An N-terminal signal peptide occupies residues 1–15 (MKKLLFVLLTITLLA). A non-LT domain region spans residues 16–259 (SCQKVSVEQT…HLNEKYFAHV (244 aa)). Residues 260 to 480 (KRFDYVDTRA…QENLSGAQPQ (221 aa)) are LT domain. E304 is an active-site residue.

This sequence in the N-terminal section; belongs to the bacterial solute-binding protein 3 family. In the C-terminal section; belongs to the transglycosylase Slt family.

Its subcellular location is the cell outer membrane. It carries out the reaction Exolytic cleavage of the (1-&gt;4)-beta-glycosidic linkage between N-acetylmuramic acid (MurNAc) and N-acetylglucosamine (GlcNAc) residues in peptidoglycan, from either the reducing or the non-reducing ends of the peptidoglycan chains, with concomitant formation of a 1,6-anhydrobond in the MurNAc residue.. Murein-degrading enzyme that degrades murein glycan strands and insoluble, high-molecular weight murein sacculi, with the concomitant formation of a 1,6-anhydromuramoyl product. Lytic transglycosylases (LTs) play an integral role in the metabolism of the peptidoglycan (PG) sacculus. Their lytic action creates space within the PG sacculus to allow for its expansion as well as for the insertion of various structures such as secretion systems and flagella. The protein is Membrane-bound lytic murein transglycosylase F of Shewanella sediminis (strain HAW-EB3).